The sequence spans 342 residues: MADDLEQQPQGWLSSWLPTWRPTSMSQLKNVEARILQCLQNKFLARYVSLPNQNKIWTVTVSPELRDRTPLVMVHGFGGGVGLWILNMDSLSTRRTLHTFDLLGFGRSSRPTFPRDPEGAEDEFVTSIETWRESMGIPSMILLGHSLGGFLATSYSIKYPDRVKHLILVDPWGFPLRPADPSQVRAPPTWVKAVASVLGRSNPLAVLRVAGPWGPGLVQRFRPDFKRKFADFFDDDTISEYIYHCNAQNPSGETAFKAMMESFGWARRPMLERIHLIRKDVPITMIYGANTWIDTSTGKKVKLQRPDSYVRDLEIEGASHHVYADQPHIFNAVVEEICDSVD.

An AB hydrolase-1 domain is found at 70-324 (PLVMVHGFGG…IEGASHHVYA (255 aa)).

It belongs to the peptidase S33 family. ABHD4/ABHD5 subfamily.

It catalyses the reaction N-hexadecanoyl-1,2-di-(9Z-octadecenoyl)-sn-glycero-3-phosphoethanolamine + H2O = N-hexadecanoyl-1-(9Z-octadecenoyl)-sn-glycero-3-phosphoethanolamine + (9Z)-octadecenoate + H(+). The enzyme catalyses an N-acyl-1,2-diacyl-sn-glycero-3-phosphoethanolamine + H2O = N,1-diacyl-sn-glycero-3-phosphoethanolamine + a fatty acid + H(+). It carries out the reaction N-hexadecanoyl-1-(9Z-octadecenoyl)-sn-glycero-3-phosphoethanolamine + H2O = N-hexadecanoyl-sn-glycero-3-phosphoethanolamine + (9Z)-octadecenoate + H(+). The catalysed reaction is N-octadecanoyl-1-(9Z-octadecenoyl)-sn-glycero-3-phosphoethanolamine + H2O = N-octadecanoyl-sn-glycero-3-phospho-ethanolamine + (9Z)-octadecenoate + H(+). It catalyses the reaction N-eicosanoyl-1-(9Z-octadecenoyl)-sn-glycero-3-phosphoethanolamine + H2O = N-eicosanoyl-sn-glycero-3-phosphoethanolamine + (9Z)-octadecenoate + H(+). The enzyme catalyses N,1-di-(9Z-octadecenoyl)-sn-glycero-3-phosphoethanolamine + H2O = N-(9Z-octadecenoyl)-sn-glycero-3-phosphoethanolamine + (9Z)-octadecenoate + H(+). It carries out the reaction N-(5Z,8Z,11Z,14Z-eicosatetraenoyl)-1-(9Z-octadecenoyl)-sn-glycero-3-phosphoethanolamine + H2O = N-(5Z,8Z,11Z,14Z-eicosatetraenoyl)-sn-glycero-3-phosphoethanolamine + (9Z)-octadecenoate + H(+). The catalysed reaction is 1-octadecanoyl-2-(9Z-octadecenoyl)-sn-glycero-3-phospho-(N-hexadecanoyl)-serine + H2O = 1-octadecanoyl-2-hydroxy-sn-glycero-3-phospho-(N-hexadecanoyl)-serine + (9Z)-octadecenoate + H(+). It catalyses the reaction 1-O-(1Z-octadecenoyl)-2-(9Z-octadecenoyl)-sn-glycero-3-phospho-N-hexadecanoyl-ethanolamine + H2O = 1-O-(1Z-octadecenyl)-sn-glycero-3-phospho-N-hexadecanoyl-ethanolamine + (9Z)-octadecenoate + H(+). The enzyme catalyses N,1-diacyl-sn-glycero-3-phosphoethanolamine + H2O = N-acyl-sn-glycero-3-phosphoethanolamine + a fatty acid + H(+). Lysophospholipase selective for N-acyl phosphatidylethanolamine (NAPE). Contributes to the biosynthesis of N-acyl ethanolamines, including the endocannabinoid anandamide by hydrolyzing the sn-1 and sn-2 acyl chains from N-acyl phosphatidylethanolamine (NAPE) generating glycerophospho-N-acyl ethanolamine (GP-NAE), an intermediate for N-acyl ethanolamine biosynthesis. Hydrolyzes substrates bearing saturated, monounsaturated, polyunsaturated N-acyl chains. Shows no significant activity towards other lysophospholipids, including lysophosphatidylcholine, lysophosphatidylethanolamine and lysophosphatidylserine. The protein is (Lyso)-N-acylphosphatidylethanolamine lipase of Bos taurus (Bovine).